A 62-amino-acid polypeptide reads, in one-letter code: Sperm protamine P1 (62 aa).

The disordered stretch occupies residues 1-62; sequence MARYRHSRSR…RYSRRRRRRY (62 aa).

Belongs to the protamine P1 family. As to expression, testis.

It is found in the nucleus. It localises to the chromosome. Functionally, protamines substitute for histones in the chromatin of sperm during the haploid phase of spermatogenesis. They compact sperm DNA into a highly condensed, stable and inactive complex. The polypeptide is Sperm protamine P1 (PRM1) (Wallabia bicolor (Swamp wallaby)).